The following is a 402-amino-acid chain: Multidrug resistance protein MdtH (402 aa).

11 helical membrane-spanning segments follow: residues 13–33 (YFLL…FPLI), 45–65 (ALMV…LGIF), 99–116 (PWLL…GTLF), 139–159 (LLMM…SWLL), 165–185 (LVCA…AWLL), 214–234 (VLTL…LPIM), 244–264 (AVKW…YPIA), 277–297 (LMAG…VGNL), 300–322 (LFTL…ETLS), 340–360 (LGLA…FDMG), and 368–388 (LPWM…GWQF).

The protein belongs to the major facilitator superfamily. DHA1 family. MdtH (TC 2.A.1.2.21) subfamily.

Its subcellular location is the cell inner membrane. The polypeptide is Multidrug resistance protein MdtH (Citrobacter koseri (strain ATCC BAA-895 / CDC 4225-83 / SGSC4696)).